We begin with the raw amino-acid sequence, 845 residues long: MDIRKEFLDFFASKGHEIIASAPLVPDDASLLFTNAGMVPFKNIFTGAVPRPTPPIRTSCQTCIRAGGKHNDLDNVGYTARHHTFFEMLGNFSFGEYFKENAIAYAWEFITEILKLDKDKLYVTVHEKDDEAFEIWAKHIAKERIYRFGDHDNFWAMGDTGPCGPCSEIFYDQGEEYFHGKEDYMGGDGDRFLEIWNLVFMQFERDKAGNLSPLPKPSIDTGMGLERVTAIKEGVFSNYDSSIFMPLIHAVEKLCGKPYKYESGASYRVIADHIRSITFLIAQGVNFDKEGRGYVLRRILRRALRHGYLLGLKEPFMYKLVDNVCELMGHHYSYLLEKKETIKEIIKLEEERFLSTISAGLELFKAQLANTKDVFSGEIAFKLYDTYGFPLDLTADMLREIGKKVDEKKFDELMNEQKARAKASWKGSGDKIKEKGDFKALLEKFGENKFIGYETMKSQSKILAILNNDFRNVDELKAGNIGWIMLDETPFYAQSGGQIYDTGLINGSNKVTDTQKFFGLNLSEVETSTNLKVGDIVKCEVDEARIETARHHSATHLLHLALREILGSGVGQAGSSVDSERLRFDFTYPKSLTSEQLLKIENNVNSQISKGGASKTEIMDINEAIKSGAIAMFSEKYGDKVRVLTLGESKEFCGGTHVRNLWEIGSFYIVKESGVSAGVRRIEAVCSKAAINYAKNFRSEFSEVQNALKSNEALSAIKKLKDEIKSLKNEISKASAAKVIDLDEKNGIKFVVSEFDGDIKTKIDELKNENDKIVAVFFKVEDGRVQIAAGVKNAPLKAGEIVKQIAKILGGGGGGRDDFATAGGKDMTKIDEAVNFARDLIKAKI.

Residues His-552, His-556, Cys-653, and His-657 each coordinate Zn(2+).

The protein belongs to the class-II aminoacyl-tRNA synthetase family. Zn(2+) serves as cofactor.

The protein localises to the cytoplasm. The catalysed reaction is tRNA(Ala) + L-alanine + ATP = L-alanyl-tRNA(Ala) + AMP + diphosphate. In terms of biological role, catalyzes the attachment of alanine to tRNA(Ala) in a two-step reaction: alanine is first activated by ATP to form Ala-AMP and then transferred to the acceptor end of tRNA(Ala). Also edits incorrectly charged Ser-tRNA(Ala) and Gly-tRNA(Ala) via its editing domain. The polypeptide is Alanine--tRNA ligase (Campylobacter hominis (strain ATCC BAA-381 / DSM 21671 / CCUG 45161 / LMG 19568 / NCTC 13146 / CH001A)).